Consider the following 293-residue polypeptide: ATP synthase gamma chain (293 aa).

This sequence belongs to the ATPase gamma chain family. F-type ATPases have 2 components, CF(1) - the catalytic core - and CF(0) - the membrane proton channel. CF(1) has five subunits: alpha(3), beta(3), gamma(1), delta(1), epsilon(1). CF(0) has three main subunits: a, b and c.

It is found in the cell inner membrane. In terms of biological role, produces ATP from ADP in the presence of a proton gradient across the membrane. The gamma chain is believed to be important in regulating ATPase activity and the flow of protons through the CF(0) complex. The protein is ATP synthase gamma chain of Leptothrix cholodnii (strain ATCC 51168 / LMG 8142 / SP-6) (Leptothrix discophora (strain SP-6)).